A 320-amino-acid polypeptide reads, in one-letter code: Melanocyte-stimulating hormone receptor (320 aa).

The Extracellular portion of the chain corresponds to Met-1–Glu-40. Asn-32 carries N-linked (GlcNAc...) asparagine glycosylation. The helical transmembrane segment at Val-41 to Ile-66 threads the bilayer. The Cytoplasmic portion of the chain corresponds to Ala-67–Pro-75. Residues Met-76–Leu-96 form a helical membrane-spanning segment. Residues Glu-97 to Asn-121 are Extracellular-facing. The helical transmembrane segment at Val-122 to Val-143 threads the bilayer. Topologically, residues Asp-144–Arg-166 are cytoplasmic. The chain crosses the membrane as a helical span at residues Ala-167–Tyr-186. Residues His-187 to Gly-194 are Extracellular-facing. A helical membrane pass occupies residues Leu-195 to Leu-214. The Cytoplasmic segment spans residues Ala-215–Ala-243. Residues Ala-244–Leu-269 traverse the membrane as a helical segment. The Extracellular segment spans residues Cys-270–Asn-282. The helical transmembrane segment at Val-283 to Phe-303 threads the bilayer. Over Arg-304–Trp-320 the chain is Cytoplasmic.

Belongs to the G-protein coupled receptor 1 family. Interacts with MGRN1, but does not undergo MGRN1-mediated ubiquitination; this interaction competes with GNAS-binding and thus inhibits agonist-induced cAMP production. Interacts with OPN3; the interaction results in a decrease in MC1R-mediated cAMP signaling and ultimately a decrease in melanin production in melanocytes.

It localises to the cell membrane. Its function is as follows. Receptor for MSH (alpha, beta and gamma) and ACTH. The activity of this receptor is mediated by G proteins which activate adenylate cyclase. Mediates melanogenesis, the production of eumelanin (black/brown) and phaeomelanin (red/yellow), via regulation of cAMP signaling in melanocytes. The polypeptide is Melanocyte-stimulating hormone receptor (MC1R) (Sus scrofa (Pig)).